The sequence spans 107 residues: UPF0145 protein CHY_0465 (107 aa).

It belongs to the UPF0145 family.

The sequence is that of UPF0145 protein CHY_0465 from Carboxydothermus hydrogenoformans (strain ATCC BAA-161 / DSM 6008 / Z-2901).